Consider the following 731-residue polypeptide: 1,4-alpha-glucan branching enzyme GlgB (731 aa).

Aspartate 408 (nucleophile) is an active-site residue. The active-site Proton donor is the glutamate 461.

The protein belongs to the glycosyl hydrolase 13 family. GlgB subfamily. As to quaternary structure, monomer.

It carries out the reaction Transfers a segment of a (1-&gt;4)-alpha-D-glucan chain to a primary hydroxy group in a similar glucan chain.. It participates in glycan biosynthesis; glycogen biosynthesis. Catalyzes the formation of the alpha-1,6-glucosidic linkages in glycogen by scission of a 1,4-alpha-linked oligosaccharide from growing alpha-1,4-glucan chains and the subsequent attachment of the oligosaccharide to the alpha-1,6 position. The chain is 1,4-alpha-glucan branching enzyme GlgB from Corynebacterium glutamicum (strain ATCC 13032 / DSM 20300 / JCM 1318 / BCRC 11384 / CCUG 27702 / LMG 3730 / NBRC 12168 / NCIMB 10025 / NRRL B-2784 / 534).